We begin with the raw amino-acid sequence, 36 residues long: GPSQPTYPGDDAPVEDLIRFYNDLQQYLNVVTRHRY.

A Tyrosine amide modification is found at Tyr36.

The protein belongs to the NPY family.

It localises to the secreted. Hormone secreted by pancreatic cells that acts as a regulator of pancreatic and gastrointestinal functions. The polypeptide is Pancreatic polypeptide (PPY) (Meleagris gallopavo (Wild turkey)).